A 914-amino-acid polypeptide reads, in one-letter code: Beta-mannosidase A (914 aa).

An N-terminal signal peptide occupies residues 1 to 20 (MRFTATAAALVASSIPATLG). N-linked (GlcNAc...) asparagine glycans are attached at residues N39, N79, N230, N265, N299, N309, and N330. The active-site Proton donor is E462. N-linked (GlcNAc...) asparagine glycans are attached at residues N591, N614, N641, N721, N744, N773, N784, and N909.

The protein belongs to the glycosyl hydrolase 2 family. Beta-mannosidase A subfamily. In terms of assembly, homodimer.

Its subcellular location is the secreted. The catalysed reaction is Hydrolysis of terminal, non-reducing beta-D-mannose residues in beta-D-mannosides.. It participates in glycan metabolism; N-glycan degradation. In terms of biological role, exoglycosidase that cleaves the single beta-linked mannose residue from the non-reducing end of beta-mannosidic oligosaccharides of various complexity and length. Involved in the degradation of polymeric mannan and galactomannan. The protein is Beta-mannosidase A (mndA) of Aspergillus flavus (strain ATCC 200026 / FGSC A1120 / IAM 13836 / NRRL 3357 / JCM 12722 / SRRC 167).